The primary structure comprises 495 residues: Bile acid-sensitive ion channel (495 aa).

The binds the plasma membrane and stabilizes the channel in the closed state stretch occupies residues 1–30 (MEHTEKSQVHAEKGLLGKIKRYLSKRPLPS). At 1-61 (MEHTEKSQVH…NIAQNQNKVR (61 aa)) the chain is on the cytoplasmic side. A helical transmembrane segment spans residues 62–82 (KVIWLAVVLGSVSLLVWQIYS). Residues 83–459 (RLVNYFTWPT…GLFCGASLIT (377 aa)) lie on the Extracellular side of the membrane. 6 disulfides stabilise this stretch: Cys112/Cys207, Cys185/Cys192, Cys298/Cys377, Cys315/Cys373, Cys328/Cys350, and Cys330/Cys342. 3 N-linked (GlcNAc...) asparagine glycosylation sites follow: Asn147, Asn163, and Asn179. Residues Asn370, Asn405, and Asn421 are each glycosylated (N-linked (GlcNAc...) asparagine). A GAS motif; ion selectivity filter motif is present at residues 454–456 (GAS). The chain crosses the membrane as a helical span at residues 460 to 480 (IIEIIEYFFTNFYWVLIFFLL). The Cytoplasmic segment spans residues 481 to 495 (KILETIQRTSPPQAV).

This sequence belongs to the amiloride-sensitive sodium channel (TC 1.A.6) family. ASIC5 subfamily. Forms homotrimeric channels. Expressed by cholangiocytes (at protein level). Detected in cerebellum, brainstem, kidney, liver, hepatocytes, lung, intestine and embryo. In the cerebellum, restricted to interneurons in the granular layer, specifically in GRM1-expressing unipolar brush cells of the vestibulocerebellum.

It localises to the apical cell membrane. It is found in the cell membrane. It carries out the reaction Na(+)(in) = Na(+)(out). The catalysed reaction is Li(+)(in) = Li(+)(out). It catalyses the reaction K(+)(in) = K(+)(out). The enzyme catalyses H(+)(in) = H(+)(out). Its activity is regulated as follows. Inhibited by the diuretic drug amiloride. Contrary to its rat ortholog it is not inhibited by Ca(2+). Forms bile acid-gated sodium channels and may play a role in bile acid-dependent absorption and secretion by epithelial cells of the bile ducts. Displays high selectivity for sodium ions but can also permit the permeation of other cations. The gating could be indirect and the consequence of alterations of the membrane environment of the channel by bile acids. As a sodium channel of type II unipolar brush cells of the vestibulocerebellum, controlling the electrical activity of these cells, could play a role in motor coordination and balance. In Mus musculus (Mouse), this protein is Bile acid-sensitive ion channel.